Reading from the N-terminus, the 718-residue chain is K(+)-insensitive pyrophosphate-energized proton pump (718 aa).

Helical transmembrane passes span 6-26 (AVLV…IWAI), 61-81 (IAIV…LNAA), 83-103 (GFLI…HVSV), 112-132 (AASL…AITG), 133-153 (LLVA…LTVW), and 168-188 (VSLG…GGIF). Lys-190 serves as a coordination point for substrate. The Mg(2+) site is built by Asp-193, Asp-197, Asn-220, and Asp-223. Helical transmembrane passes span 235-255 (LFET…IFFH), 265-285 (LYPL…TFFV), 300-320 (GLIA…TLTV), 335-355 (GTNL…IVVI), 385-405 (GLAV…GGII), and 413-433 (LFGT…IVAL). Residue Asp-441 participates in Mg(2+) binding. A run of 4 helical transmembrane segments spans residues 472-492 (AVTK…LFAA), 524-544 (YVVA…GMAM), 593-613 (IIPS…VLLI), and 620-640 (AFAA…FVAI). 3 residues coordinate Ca(2+): Asp-650, Asp-682, and Asp-686. Lys-689 serves as a coordination point for substrate. The chain crosses the membrane as a helical span at residues 695–715 (AVNPAIKITNIVALLLLAVLA).

Belongs to the H(+)-translocating pyrophosphatase (TC 3.A.10) family. K(+)-insensitive subfamily. As to quaternary structure, homodimer. Requires Mg(2+) as cofactor.

It localises to the cell inner membrane. The catalysed reaction is diphosphate + H2O + H(+)(in) = 2 phosphate + 2 H(+)(out). Functionally, proton pump that utilizes the energy of pyrophosphate hydrolysis as the driving force for proton movement across the membrane. Generates a proton motive force. The protein is K(+)-insensitive pyrophosphate-energized proton pump of Brucella melitensis biotype 1 (strain ATCC 23456 / CCUG 17765 / NCTC 10094 / 16M).